The following is a 906-amino-acid chain: MNPADADEEQRVSSVPAHRCRPGRIPSRSAETETEESSAEVAADTIGGDDSELEEGPLPGGDKEASAGNTNVSSGVACVAGFTSGGGVVSWRPESPSPDGTPSVLSLTRDSGPAVPSRGGRVSSGLSTFNPAGATRMELDSVEEEDDFGASLCKVSPPIQATRMLMGKKCHCHGYWGKFRFCGVQEPARELPSDRNALWREMDTVSRHSAGLGSFRLFQLIMRHGPCLIRHSPRCDLLLGRFYFKANWARESRTPLCYASELCDESVRRFVLRHMEDLPKLAEETARFVELAGCWGLYAAILCLDKVCRQLHGQDESPGGVFLRIAVALTAAIENSRHSRIYRFHLDARFEGEVLESVLKRCRDGQLSLSTFTMSTVGFDRVPQYDFLISADPFSRDASWAAMCKWMSTLSCGVSVSVNVTRLNADVNSVIRCLGGYCDLIREKEVHRPVVRVFVDMWDVAAIRVINFILKESTSELTGVCYAFNVPSVLMKRYRAREQRYSLFGRPVSRRLSDLGQESAFEKEYSRCEQSCPKVVVNTDDFLKKMLLCALKGRASVVFVHHVVKYSIMADSVCLPPCLSPDMASCHFGECDMPVQRLTVNVARCVFARSDEQKLHLPDVVLGNTRRYFDLSVLRELVTEAVVWGNARLDALMSASEWWVESALEKLRPLHIGVAGLHTALMRLGFTYFASWDLIERIFEHMYFAAVRASVDLCKSGLPRCEWFERTIYQEGKFIFELYRLPRLSIASARWEALRADMLEFGLRNCQFLAVGPDDEVAHLWGVTPSVWASRGTVFEEETVWSLCPPNRECYFPTVVRRPLRVPVVNYAWLEQHQEEGKATQCLFQAAPAIQNDVEMAAVNLSVFVDQCVALVFYYDSGMTPDVLLARMLKWYHWRFKVGVYKYCAS.

Disordered stretches follow at residues Met1–Thr70 and Val89–Phe129. Polar residues predominate over residues Pro98 to Arg109.

It belongs to the ribonucleoside diphosphate reductase large chain family.

Its subcellular location is the virion. It localises to the host cytoplasm. Functionally, does not possess a ribonucleotide reductase activity. Betaherpesviruses probably use another strategy to expand the dNTP pool in a quiescent host cell. This Human cytomegalovirus (strain AD169) (HHV-5) protein is Ribonucleoside-diphosphate reductase large subunit-like protein.